The primary structure comprises 327 residues: uncharacterized protein (327 aa).

Residues 1–24 (MAMACLCLANISWATVCANSTGVA) form the signal peptide.

Belongs to the fimbrial protein family.

Its subcellular location is the fimbrium. In terms of biological role, part of the sfmACDHF fimbrial operon. Could contribute to adhesion to various surfaces in specific environmental niches. Increases adhesion to eukaryotic T24 bladder epithelial cells in the absence of fim genes. This is an uncharacterized protein from Escherichia coli (strain K12).